Here is a 344-residue protein sequence, read N- to C-terminus: Nuclear distribution protein nudE-like 1-B (344 aa).

The stretch at 26–189 forms a coiled coil; the sequence is YKKSCHDAQE…ELAVRERTSD (164 aa).

Belongs to the nudE family. Phosphorylated in mitosis.

It localises to the cytoplasm. Its subcellular location is the cytoskeleton. The protein resides in the microtubule organizing center. The protein localises to the centrosome. It is found in the spindle. In terms of biological role, required for organization of the cellular microtubule array and microtubule anchoring at the centrosome. Positively regulates the activity of the minus-end directed microtubule motor protein dynein. May enhance dynein-mediated microtubule sliding by targeting dynein to the microtubule plus end. This Danio rerio (Zebrafish) protein is Nuclear distribution protein nudE-like 1-B (ndel1b).